Consider the following 364-residue polypeptide: Aminomethyltransferase (364 aa).

It belongs to the GcvT family. The glycine cleavage system is composed of four proteins: P, T, L and H.

It catalyses the reaction N(6)-[(R)-S(8)-aminomethyldihydrolipoyl]-L-lysyl-[protein] + (6S)-5,6,7,8-tetrahydrofolate = N(6)-[(R)-dihydrolipoyl]-L-lysyl-[protein] + (6R)-5,10-methylene-5,6,7,8-tetrahydrofolate + NH4(+). Its function is as follows. The glycine cleavage system catalyzes the degradation of glycine. The chain is Aminomethyltransferase from Shewanella sediminis (strain HAW-EB3).